The sequence spans 265 residues: L-histidine 2-aminobutanoyltransferase (265 aa).

Belongs to the methyltransferase superfamily. CntL family.

The catalysed reaction is L-histidine + S-adenosyl-L-methionine = (2S)-2-amino-4-{[(1S)-1-carboxy-2-(1H-imidazol-4-yl)ethyl]amino}butanoate + S-methyl-5'-thioadenosine + H(+). Functionally, catalyzes the nucleophilic attack of one alpha-aminobutanoate moiety from SAM onto L-histidine to produce the intermediate (2S)-2-amino-4-{[(1S)-1-carboxy-2-(1H-imidazol-4-yl)ethyl]amino}butanoate. Functions in the biosynthesis of the metallophore yersinopine, which is involved in metal acquisition and thus enables bacterial growth inside the host, where metal access is limited. Therefore, this enzyme probably contributes to Yersinia virulence. This chain is L-histidine 2-aminobutanoyltransferase, found in Yersinia pestis.